The following is a 2208-amino-acid chain: Glutamate synthase 1 [NADH], chloroplastic (2208 aa).

A chloroplast-targeting transit peptide spans 1–49 (MSAASSSSVLHLRTNQQLLSLRSLKNSTSVASQLAVTSGVSRRRSCTAR). Cysteine 117 acts as the Nucleophile in catalysis. The region spanning 117–521 (CGVGFVAELS…PGMMLLVDFE (405 aa)) is the Glutamine amidotransferase type-2 domain. A disordered region spans residues 1040–1067 (GKSNTGEGGELPSRMEPLADGSRNPKRS). Position 1211–1268 (1211–1268 (LAETHQTLVANDLRGRTVLQTDGQLKTGRDVAVAALLGAEEFGFSTAPLITLGCIMMR)) interacts with FMN. 3 residues coordinate [3Fe-4S] cluster: cysteine 1264, cysteine 1270, and cysteine 1275. NAD(+) is bound at residue 1995-2009 (GGGDTGTDCIGTSIR).

It belongs to the glutamate synthase family. In terms of assembly, monomer. [3Fe-4S] cluster serves as cofactor. Requires FAD as cofactor. It depends on FMN as a cofactor. In terms of tissue distribution, highly expressed in roots and at low levels in leaves.

It localises to the plastid. The protein localises to the chloroplast. The catalysed reaction is 2 L-glutamate + NAD(+) = L-glutamine + 2-oxoglutarate + NADH + H(+). Its pathway is amino-acid biosynthesis; L-glutamate biosynthesis via GLT pathway; L-glutamate from 2-oxoglutarate and L-glutamine (NAD(+) route): step 1/1. It participates in energy metabolism; nitrogen metabolism. Involved in glutamate biosynthesis. Required for non-photorespiratory ammonium assimilation. Probably involved in primary ammonium assimilation in roots. The polypeptide is Glutamate synthase 1 [NADH], chloroplastic (GLT1) (Arabidopsis thaliana (Mouse-ear cress)).